The chain runs to 63 residues: Large ribosomal subunit protein uL29 (63 aa).

It belongs to the universal ribosomal protein uL29 family.

This chain is Large ribosomal subunit protein uL29, found in Haemophilus ducreyi (strain 35000HP / ATCC 700724).